A 496-amino-acid chain; its full sequence is MRDEDNNKLILKRKSKLALLREVGNPFINNFKPENLAQNIIQEFKGFSKEELEKKNMQVSIAGRMMLKRVMGKVSFVHVQDSSGKIQLFVTCDKLPESFYNEQFKKWDIGDIIGAIGILFKTNMGELSIRIDDIKLLTKSLRPLPGKFHGLSDQEIRYRQRYVDLIMNKTSRNTFKRRSQIINYIRNFFNHHDFIEVETPMLQTIPGGATAKPFETYHNALDMPMYFRISPELYLKRLIIGGMNKVFEINRNFRNEGLSTRHNPEFTMIEFYQAYGTYHDLMNLTEKLFRSIALDVCGSANVYYQGNNLDFFKSFKRISVVDSILQYNPSLIATDLNQKNAKQTAEKLGIQIKENWGLGKIQIEIFETTVEEKLLQPTFITEYPTEVSPLARRNDDNPFITDRFELFISGCEIANGFSELNDAQDQAERFKKQVEEKDLGNDESMYYDADYIRALEYGMPPTAGEGIGIDRLVMLFTDSPSIRDVILFPHMRAEVK.

Residues glutamate 405 and glutamate 412 each coordinate Mg(2+).

This sequence belongs to the class-II aminoacyl-tRNA synthetase family. In terms of assembly, homodimer. Requires Mg(2+) as cofactor.

The protein resides in the cytoplasm. The enzyme catalyses tRNA(Lys) + L-lysine + ATP = L-lysyl-tRNA(Lys) + AMP + diphosphate. This Vesicomyosocius okutanii subsp. Calyptogena okutanii (strain HA) protein is Lysine--tRNA ligase.